The sequence spans 325 residues: uncharacterized protein (325 aa).

Polar residues-rich tracts occupy residues 1-21 and 29-57; these read MSYQ…SSSA and EPFS…SSRA. Positions 1–325 are disordered; the sequence is MSYQQRANDS…LKTGHHSERY (325 aa). Residues 86-109 are compositionally biased toward basic and acidic residues; sequence ESRKKEQSDVRGGDTSYSRRHDDS. Polar residues-rich tracts occupy residues 114 to 167 and 174 to 193; these read NKYS…TTQG and YSQS…TPSD. 2 stretches are compositionally biased toward low complexity: residues 200 to 210 and 252 to 278; these read YDYSSSGSHTH and ATDT…QRNA. Positions 282-325 are enriched in basic and acidic residues; the sequence is EDEHVSMGDKMKGNMEKMAGKLTRDPELVQKGEDLKTGHHSERY.

This is an uncharacterized protein from Schizosaccharomyces pombe (strain 972 / ATCC 24843) (Fission yeast).